The sequence spans 265 residues: Thiazole synthase (265 aa).

The active-site Schiff-base intermediate with DXP is Lys-107. 1-deoxy-D-xylulose 5-phosphate contacts are provided by residues Gly-168, Ala-194–Gly-195, and Asn-216–Thr-217.

The protein belongs to the ThiG family. In terms of assembly, homotetramer. Forms heterodimers with either ThiH or ThiS.

The protein resides in the cytoplasm. It carries out the reaction [ThiS sulfur-carrier protein]-C-terminal-Gly-aminoethanethioate + 2-iminoacetate + 1-deoxy-D-xylulose 5-phosphate = [ThiS sulfur-carrier protein]-C-terminal Gly-Gly + 2-[(2R,5Z)-2-carboxy-4-methylthiazol-5(2H)-ylidene]ethyl phosphate + 2 H2O + H(+). Its pathway is cofactor biosynthesis; thiamine diphosphate biosynthesis. Functionally, catalyzes the rearrangement of 1-deoxy-D-xylulose 5-phosphate (DXP) to produce the thiazole phosphate moiety of thiamine. Sulfur is provided by the thiocarboxylate moiety of the carrier protein ThiS. In vitro, sulfur can be provided by H(2)S. The sequence is that of Thiazole synthase from Pseudomonas paraeruginosa (strain DSM 24068 / PA7) (Pseudomonas aeruginosa (strain PA7)).